Reading from the N-terminus, the 414-residue chain is 4-hydroxy-3-methylbut-2-en-1-yl diphosphate synthase (flavodoxin) (414 aa).

Cys-304, Cys-307, Cys-350, and Glu-357 together coordinate [4Fe-4S] cluster.

The protein belongs to the IspG family. [4Fe-4S] cluster serves as cofactor.

It carries out the reaction (2E)-4-hydroxy-3-methylbut-2-enyl diphosphate + oxidized [flavodoxin] + H2O + 2 H(+) = 2-C-methyl-D-erythritol 2,4-cyclic diphosphate + reduced [flavodoxin]. Its pathway is isoprenoid biosynthesis; isopentenyl diphosphate biosynthesis via DXP pathway; isopentenyl diphosphate from 1-deoxy-D-xylulose 5-phosphate: step 5/6. In terms of biological role, converts 2C-methyl-D-erythritol 2,4-cyclodiphosphate (ME-2,4cPP) into 1-hydroxy-2-methyl-2-(E)-butenyl 4-diphosphate. This is 4-hydroxy-3-methylbut-2-en-1-yl diphosphate synthase (flavodoxin) from Aromatoleum aromaticum (strain DSM 19018 / LMG 30748 / EbN1) (Azoarcus sp. (strain EbN1)).